We begin with the raw amino-acid sequence, 147 residues long: MVEWTDEERTIINDIFSTLDYEEIGRKSLCRCLIVYPWTQRYFGAFGNLYNAETIMANPLIAAHGTKILHGLDRALKNMDDIKNTYAELSLLHSDKLHVDPDNFRLLADCLTVVIAAKMGPAFTVDTQVAVQKFLSVVVSALGRQYH.

Residues 3 to 147 (EWTDEERTII…VVSALGRQYH (145 aa)) enclose the Globin domain. H64 and H93 together coordinate heme b.

It belongs to the globin family. In terms of assembly, hb 2 is a heterotetramer of two alpha-2 and two beta-2 chains. Hb 3 is a heterotetramer of two alpha-1 and two beta-2 chains. As to expression, red blood cells.

Its function is as follows. Involved in oxygen transport from gills to the various peripheral tissues. This Gadus morhua (Atlantic cod) protein is Hemoglobin subunit beta-2 (hbb2).